The primary structure comprises 340 residues: DNA-directed RNA polymerase subunit alpha (340 aa).

An alpha N-terminal domain (alpha-NTD) region spans residues 1 to 238 (MVDPIVTKNW…EQLSIFINFD (238 aa)). Residues 255–340 (LNENLFRSVD…AAPQGGAPKV (86 aa)) are alpha C-terminal domain (alpha-CTD).

Belongs to the RNA polymerase alpha chain family. As to quaternary structure, homodimer. The RNAP catalytic core consists of 2 alpha, 1 beta, 1 beta' and 1 omega subunit. When a sigma factor is associated with the core the holoenzyme is formed, which can initiate transcription.

It carries out the reaction RNA(n) + a ribonucleoside 5'-triphosphate = RNA(n+1) + diphosphate. In terms of biological role, DNA-dependent RNA polymerase catalyzes the transcription of DNA into RNA using the four ribonucleoside triphosphates as substrates. This chain is DNA-directed RNA polymerase subunit alpha, found in Anaeromyxobacter dehalogenans (strain 2CP-1 / ATCC BAA-258).